The sequence spans 179 residues: Small ribosomal subunit protein uS7 (179 aa).

Belongs to the universal ribosomal protein uS7 family. Part of the 30S ribosomal subunit. Contacts proteins S9 and S11.

Functionally, one of the primary rRNA binding proteins, it binds directly to 16S rRNA where it nucleates assembly of the head domain of the 30S subunit. Is located at the subunit interface close to the decoding center, probably blocks exit of the E-site tRNA. The protein is Small ribosomal subunit protein uS7 of Shigella flexneri serotype 5b (strain 8401).